The sequence spans 184 residues: Peptidyl-tRNA hydrolase (184 aa).

Tyr-14 contributes to the tRNA binding site. His-19 serves as the catalytic Proton acceptor. Phe-64, Asn-66, and Asn-112 together coordinate tRNA.

Belongs to the PTH family. As to quaternary structure, monomer.

Its subcellular location is the cytoplasm. The enzyme catalyses an N-acyl-L-alpha-aminoacyl-tRNA + H2O = an N-acyl-L-amino acid + a tRNA + H(+). Its function is as follows. Hydrolyzes ribosome-free peptidyl-tRNAs (with 1 or more amino acids incorporated), which drop off the ribosome during protein synthesis, or as a result of ribosome stalling. Catalyzes the release of premature peptidyl moieties from peptidyl-tRNA molecules trapped in stalled 50S ribosomal subunits, and thus maintains levels of free tRNAs and 50S ribosomes. The chain is Peptidyl-tRNA hydrolase from Listeria welshimeri serovar 6b (strain ATCC 35897 / DSM 20650 / CCUG 15529 / CIP 8149 / NCTC 11857 / SLCC 5334 / V8).